Here is an 838-residue protein sequence, read N- to C-terminus: Protein kintoun (838 aa).

Disordered regions lie at residues 106 to 125 (RPKN…LNWS), 212 to 238 (NPTA…GKPE), 370 to 411 (LRHF…TSSP), 557 to 696 (NAPL…DSCS), and 776 to 838 (QQRR…EMDD). Residues 114 to 125 (DPSSGSRGLNWS) show a composition bias toward polar residues. The span at 370–380 (LRHFSREDSGV) shows a compositional bias: basic and acidic residues. The residue at position 378 (S378) is a Phosphoserine. The segment covering 389–398 (PVEEDPDGEL) has biased composition (acidic residues). The span at 557–572 (NAPLDVEFERNQEGHA) shows a compositional bias: basic and acidic residues. Residues 583 to 592 (EEEEEEEDKE) show a composition bias toward acidic residues. The segment covering 601–611 (DQQQQQQVQNK) has biased composition (low complexity). Composition is skewed to basic residues over residues 612 to 623 (KSGKKQRKRNKK) and 673 to 683 (RSHRGILKRFS). S781 carries the post-translational modification Phosphoserine. Basic and acidic residues predominate over residues 789 to 802 (EETRGSALKQKENP).

It belongs to the PIH1 family. Kintoun subfamily. Interacts with Pp1alpha-96A, Pp1-87B, Pp1-13C and flw.

It localises to the cytoplasm. Functionally, required for cytoplasmic pre-assembly of axonemal dyneins, thereby playing a central role in motility in cilia and flagella. Involved in pre-assembly of dynein arm complexes in the cytoplasm before intraflagellar transport loads them for the ciliary compartment. This chain is Protein kintoun, found in Drosophila sechellia (Fruit fly).